The chain runs to 511 residues: MSDHEEESHGASPTSPASSGASSPLAPISPRSEGNAPESPSGDVQDIYKDESFEAPASPARDSSAPASPSAASPAGSRSPSPSPVKTKSKVMIDSDEDSDAEESANKRALIDSDASDAEGKKRRVMLDSDDSDHEGTSKKEPTTKNLFGDDSDDDDEDRPKKTNDLDEFVEGRDEEESQETSKPAYDSDDDDGPVDRHGRHFEWDFDKMLAEKKAERKKKTRRGGKDGGIDIINDDDGTVSRLVERMKHAAKSDRNANIERKPAFQKIKMLPEVKAIMLRAGIVEVLIENGFMSALSEWLAPLPDKCLPALDIRITVLKLLHNPRFWKLDRSTLKQSGLGKAVMMLYKHPNETKENKGIANKLIGEWARPIYHLDTDYSTVSRQEREERDYSRMPEKRKKKINSRDEEEPNDDDQPKRPRIRDADEMGPTKSDDLKPGDKGYIPRARVPKPSTKDYVIRPEWRVTGAFKGEKKSTGNNRYDQTFRDFQERTKKSKANRIVKVSLEGRNMGI.

A disordered region spans residues methionine 1–arginine 200. Low complexity-rich tracts occupy residues alanine 11–proline 30 and alanine 55–lysine 86. Acidic residues predominate over residues aspartate 94 to glutamate 103. The segment covering histidine 134 to threonine 143 has biased composition (basic and acidic residues). Positions leucine 166 to glutamine 179 are enriched in acidic residues. Positions serine 294 to leucine 374 constitute a TFIIS N-terminal domain. The tract at residues serine 382–lysine 454 is disordered. Composition is skewed to basic and acidic residues over residues arginine 383 to proline 395 and aspartate 414 to aspartate 425.

Belongs to the IWS1 family.

It is found in the nucleus. This is IWS1-like protein from Caenorhabditis elegans.